The following is a 350-amino-acid chain: Phosphotriesterase-related protein (350 aa).

The a divalent metal cation site is built by H22, H24, E169, H201, H230, and D298.

Belongs to the metallo-dependent hydrolases superfamily. Phosphotriesterase family. It depends on a divalent metal cation as a cofactor.

This chain is Phosphotriesterase-related protein, found in Drosophila mojavensis (Fruit fly).